A 977-amino-acid polypeptide reads, in one-letter code: Ephrin type-A receptor 1 (977 aa).

An N-terminal signal peptide occupies residues 1–26; sequence MERRWPLGLALLLLLLCAPLPPGARA. Residues 27-548 are Extracellular-facing; that stretch reads EEVTLMDTST…PVSRSLTGGE (522 aa). The Eph LBD domain occupies 28–210; it reads EVTLMDTSTA…FYQRCAETVH (183 aa). Fibronectin type-III domains lie at 333–446 and 448–539; these read PPSA…MGHA and SLSG…TSPP. 2 N-linked (GlcNAc...) asparagine glycosylation sites follow: Asn-415 and Asn-479. A helical membrane pass occupies residues 549–569; sequence IVAVIFGLLLGIALLIGIYVF. Residues 570 to 977 are Cytoplasmic-facing; sequence RSRRGQRQRQ…ILCSIQGFKD (408 aa). Phosphotyrosine; by autocatalysis is present on residues Tyr-600 and Tyr-606. The 261-residue stretch at 625–885 folds into the Protein kinase domain; the sequence is LIVDTVIGEG…QLQAHLEQLL (261 aa). ATP-binding positions include 631–639 and Lys-657; that span reads IGEGEFGEV. The active-site Proton acceptor is the Asp-750. The residue at position 782 (Tyr-782) is a Phosphotyrosine; by autocatalysis. Ser-907 and Ser-911 each carry phosphoserine. Residues 914-977 form the SAM domain; the sequence is IPYRSVSEWL…ILCSIQGFKD (64 aa). A PDZ-binding motif is present at residues 975 to 977; sequence FKD.

It belongs to the protein kinase superfamily. Tyr protein kinase family. Ephrin receptor subfamily. Homodimer. Forms a signaling complex with LCK; PTK2B/PYK2 and PI3-kinase upon activation by EFNA1; regulates T-lymphocytes migration. Interacts (via SAM domain) with ILK (via ANK repeats); stimulated by EFNA1 but independent of the kinase activity of EPHA1. Interacts (kinase activity-dependent) with PTK2/FAK1. Post-translationally, phosphorylated. Autophosphorylation is stimulated by its ligand EFNA1. In terms of processing, ubiquitinated. As to expression, preferentially expressed in epithelial cells including skin, kidney, liver and thymus. Expressed in myogenic progenitor cells.

Its subcellular location is the cell membrane. The enzyme catalyses L-tyrosyl-[protein] + ATP = O-phospho-L-tyrosyl-[protein] + ADP + H(+). Its function is as follows. Receptor tyrosine kinase which binds promiscuously membrane-bound ephrin-A family ligands residing on adjacent cells, leading to contact-dependent bidirectional signaling into neighboring cells. The signaling pathway downstream of the receptor is referred to as forward signaling while the signaling pathway downstream of the ephrin ligand is referred to as reverse signaling. Binds with a low affinity EFNA3 and EFNA4 and with a high affinity to EFNA1 which most probably constitutes its cognate/functional ligand. Upon activation by EFNA1 induces cell attachment to the extracellular matrix inhibiting cell spreading and motility through regulation of ILK and downstream RHOA and RAC. Also plays a role in angiogenesis and regulates cell proliferation. May play a role in apoptosis. The protein is Ephrin type-A receptor 1 (Epha1) of Mus musculus (Mouse).